The sequence spans 915 residues: Nitrate reductase [NADH] (915 aa).

Residues 1–102 (MAASVEPRQP…PRDEGTADAW (102 aa)) form a disordered region. The segment covering 16-26 (APATAPTARAP) has biased composition (low complexity). The span at 57-71 (AEEEEDDDDEDDEGH) shows a compositional bias: acidic residues. A compositionally biased stretch (basic and acidic residues) spans 88 to 97 (PSTRDPRDEG). C189 is a binding site for Mo-molybdopterin. In terms of domain architecture, Cytochrome b5 heme-binding spans 538–613 (DKQFTMSEVR…LDTYRIGELI (76 aa)). H573 and H596 together coordinate heme. Residues 654–767 (REKVPCRLVD…KGPLGHVEYT (114 aa)) form the FAD-binding FR-type domain. Residues 706 to 709 (RAYT), 723 to 727 (LVKVY), F728, F735, 740 to 742 (LMT), S791, and T794 each bind FAD.

This sequence belongs to the nitrate reductase family. In terms of assembly, homodimer. FAD serves as cofactor. The cofactor is heme. Requires Mo-molybdopterin as cofactor.

The catalysed reaction is nitrite + NAD(+) + H2O = nitrate + NADH + H(+). Functionally, nitrate reductase is a key enzyme involved in the first step of nitrate assimilation in plants, fungi and bacteria. In Hordeum vulgare (Barley), this protein is Nitrate reductase [NADH].